Consider the following 287-residue polypeptide: 23S rRNA (uridine(2479)-2'-O)-methyltransferase (287 aa).

S-adenosyl-L-methionine-binding positions include 210–211 (TD), glycine 232, and 252–254 (IPM).

Belongs to the class IV-like SAM-binding methyltransferase superfamily. RNA methyltransferase TsnR/AvirB family. In terms of assembly, homodimer.

The enzyme catalyses uridine(2479) in 23S rRNA + S-adenosyl-L-methionine = 2'-O-methyluridine(2479) in 23S rRNA + S-adenosyl-L-homocysteine + H(+). Its function is as follows. Specifically methylates the 2'-O-ribose position of uridine-2479 in 23S ribosomal RNA. Confers resistance to antibiotic avilamycin, an orthosomycin antibiotic. The protein is 23S rRNA (uridine(2479)-2'-O)-methyltransferase (aviRb) of Streptomyces viridochromogenes.